The following is a 191-amino-acid chain: UPF0398 protein LSEI_1479 (191 aa).

The protein belongs to the UPF0398 family.

This is UPF0398 protein LSEI_1479 from Lacticaseibacillus paracasei (strain ATCC 334 / BCRC 17002 / CCUG 31169 / CIP 107868 / KCTC 3260 / NRRL B-441) (Lactobacillus paracasei).